Here is a 190-residue protein sequence, read N- to C-terminus: Tegument antigen (190 aa).

EF-hand domains are found at residues 8–43 and 51–77; these read SQME…YRLD and IARF…KVSE. 5 residues coordinate Ca(2+): Asp-55, Asp-57, Asp-59, Lys-61, and Glu-66.

As to expression, adult and schistosomula tegument.

The sequence is that of Tegument antigen from Schistosoma mansoni (Blood fluke).